The following is a 200-amino-acid chain: Somatotropin (200 aa).

The first 22 residues, 1 to 22 (MARVLVVLSVVVASLFFSQGAT), serve as a signal peptide directing secretion. Position 38 (histidine 38) interacts with Zn(2+). A disulfide bridge connects residues cysteine 71 and cysteine 173. Glutamate 182 contributes to the Zn(2+) binding site. Cysteine 190 and cysteine 198 are oxidised to a cystine.

It belongs to the somatotropin/prolactin family.

The protein localises to the secreted. Growth hormone plays an important role in growth control and is involved in the regulation of several anabolic processes. Implicated as an osmoregulatory substance important for seawater adaptation. This is Somatotropin (gh) from Pangasianodon gigas (Mekong giant catfish).